The following is a 286-amino-acid chain: Alpha/beta-gliadin (286 aa).

An N-terminal signal peptide occupies residues methionine 1 to alanine 20. The disordered stretch occupies residues leucine 51 to glutamine 120. Residues proline 56 to serine 71 are compositionally biased toward pro residues. Low complexity predominate over residues glutamine 72–glutamine 92. Residues proline 93–glutamine 104 are compositionally biased toward pro residues. Positions proline 105–glutamine 120 are enriched in low complexity.

The protein belongs to the gliadin/glutenin family. Post-translationally, substrate of transglutaminase.

Functionally, gliadin is the major seed storage protein in wheat. The protein is Alpha/beta-gliadin of Triticum aestivum (Wheat).